Consider the following 731-residue polypeptide: MFRVFGSFGSKGNQSSGEEQSTKTKQVLKQANDFEIALKAMDFVLDDRTDEGLNLLKKAEMETGSDQTILTLARGVIEFLQATLSFETEEMKRAAITLGKAEQMSWKSKQNAEKTNFRSSSIYPPGTVYAVTYTESCLLHALLMLFSESMMEAAKALLKLRRAYTMLQDIMVTVKKAERSKNSSSPSPSEKSQESCGSFVSAETTFISVDIPYKLSSEDKSNPLLLEFAEKIYTMRMGRLSGAHIGNTPSFHRLRDDLGLQTTPSQASDRHSVSDDFDLEQATIDEFIHSGANLCYGILQVVLSLLPPAIGAVLSIVGFKGSREEGLRLVWKAIKERNVHGCIGLLGLMFYYDGPFQFTDADFDIPPNDNGSRALNKSRTNDSSLLPGYMDSATLLHPGKILEDALLKARALFPNSALWLLNEAKMLAGKGRLRDSLALMDSIDVNSIRMRQVKSLMVFERAILLVNLHEYNRAADDLISLLDISDWSHALYTYFAGCCYLENWRMTQLGLLNDGKEQFYKERARELIFDAPSLLGKKTFKSKNLPLDRFMLRKVQQFNNMQKKLNLQEPLDSIATSPVHELAYFYNGYNRMTENDLILTKKMLTEYHNPAIDSEDPDQELIRNLLLSLTLRRLGDAERGLALLDDIVLPKIFYIQNGKVKYFKKTEDPWAYPAALYERALFCWKLGGMESLNECREWLLRAQNYAADYELSTRIGMKIKAALDRVENALA.

The segment at 1-26 is disordered; it reads MFRVFGSFGSKGNQSSGEEQSTKTKQ. Positions 10-26 are enriched in polar residues; it reads SKGNQSSGEEQSTKTKQ. Ser265, Ser268, and Ser378 each carry phosphoserine. A Phosphothreonine modification is found at Thr380. Phosphoserine occurs at positions 383 and 392.

The protein belongs to the IML2 family. As to quaternary structure, interacts with lipid droplet proteins PET10 and PDR16.

The protein localises to the cytoplasm. Its subcellular location is the nucleus. In terms of biological role, inclusion body (IB) resident protein that interacts strongly with lipid droplet (LD) proteins. Involved in LD-mediated IB clearing after protein folding stress, probably by enabling access to the IBs of an LD-stored soluble sterol derivative that acts as a chaperone in inclusion clearing. This Saccharomyces cerevisiae (strain YJM789) (Baker's yeast) protein is Inclusion body clearance protein IML2 (IML2).